Here is a 174-residue protein sequence, read N- to C-terminus: Small ribosomal subunit protein uS5 (174 aa).

Residues 18-81 (WQERVIQIRR…ADGKKHLIDI (64 aa)) form the S5 DRBM domain.

This sequence belongs to the universal ribosomal protein uS5 family. As to quaternary structure, part of the 30S ribosomal subunit. Contacts proteins S4 and S8.

Its function is as follows. With S4 and S12 plays an important role in translational accuracy. In terms of biological role, located at the back of the 30S subunit body where it stabilizes the conformation of the head with respect to the body. This chain is Small ribosomal subunit protein uS5, found in Trichormus variabilis (strain ATCC 29413 / PCC 7937) (Anabaena variabilis).